A 225-amino-acid chain; its full sequence is UPF0758 protein BPP1850 (225 aa).

An MPN domain is found at 103–225 (ALANPDLVRR…TVSMAAQGHL (123 aa)). Residues H174, H176, and D187 each coordinate Zn(2+). The short motif at 174-187 (HNHPGGTAAASAAD) is the JAMM motif element.

Belongs to the UPF0758 family.

In Bordetella parapertussis (strain 12822 / ATCC BAA-587 / NCTC 13253), this protein is UPF0758 protein BPP1850.